The primary structure comprises 424 residues: 5,5'-dehydrodivanillate O-demethylase oxygenase subunit (424 aa).

The 109-residue stretch at 27-135 folds into the Rieske domain; that stretch reads WHPIGGESEF…VRALGGLLWA (109 aa). [2Fe-2S] cluster contacts are provided by Cys-68, His-70, Cys-87, and His-90. 3 residues coordinate Fe cation: His-181, His-186, and Asp-306.

It belongs to the bacterial ring-hydroxylating dioxygenase alpha subunit family. In terms of assembly, homotrimer. The three-component monooxygenase is composed of an oxygenase (LigXa), a ferredoxin (LigXc) and a ferredoxin reductase (LigXd). The cofactor is [2Fe-2S] cluster. It depends on Fe cation as a cofactor.

It carries out the reaction 5,5'-dehydrodivanillate + NADH + O2 + H(+) = 2,2',3-trihydroxy-3'-methoxy-5,5'-dicarboxybiphenyl + formaldehyde + NAD(+) + H2O. Its function is as follows. Involved in the catabolism of 5,5'-dehydrodivanillate (DDVA), an intermediate in the biodegradation of lignin. Part of a three-component monooxygenase that catalyzes the O-demethylation of DDVA, leading to the formation of 2,2',3-trihydroxy-3'-methoxy-5,5'-dicarboxybiphenyl (OH-DDVA). This Sphingobium sp. (strain NBRC 103272 / SYK-6) protein is 5,5'-dehydrodivanillate O-demethylase oxygenase subunit.